A 71-amino-acid polypeptide reads, in one-letter code: Prokaryotic ubiquitin-like protein Pup (71 aa).

Positions 1–18 (MATRDSGGQSQTGRSQQG) are enriched in low complexity. Residues 1–42 (MATRDSGGQSQTGRSQQGEEIEDVTTEASPEVAERHAEITED) form a disordered region. The tract at residues 27–65 (EASPEVAERHAEITEDVDDLLDEIDSVLEENAEEFVRGY) is ARC ATPase binding. Residues 31–60 (EVAERHAEITEDVDDLLDEIDSVLEENAEE) are a coiled coil. Glu-71 is covalently cross-linked (Isoglutamyl lysine isopeptide (Glu-Lys) (interchain with K-? in acceptor proteins)).

This sequence belongs to the prokaryotic ubiquitin-like protein family. Strongly interacts with the proteasome-associated ATPase ARC through a hydrophobic interface; the interacting region of Pup lies in its C-terminal half. There is one Pup binding site per ARC hexamer ring.

The protein operates within protein degradation; proteasomal Pup-dependent pathway. Protein modifier that is covalently attached to lysine residues of substrate proteins, thereby targeting them for proteasomal degradation. The tagging system is termed pupylation. In Salinispora arenicola (strain CNS-205), this protein is Prokaryotic ubiquitin-like protein Pup.